The sequence spans 348 residues: MTLQAQLEALRDNTLKEIAQVATLKELNQIRVETLGKKGPITEVLRGMKNLSPEERPVVGGFANEIRDLLTEAIEARKVVLENEALNAALKEESLDVTLPGKQMPQGTRHILTQVMEEIEDIFLGMGYQVVEGYEVESDHYNFERMNLPKDHPARDMQDTFYISDEMLIRTHTSPVQARTMEKHDFSKGALRMISPGKVFRRDTDDATHSHQFHQIEGLVVDKNVTMGDLKGTLEVMMKKMFGEDRKIRLRPSYFPFTEPSVEVDVSCFKCGGAGCNVCKHTGWIEILGAGMVHPDVLQMSGIDPTEYSGFAFGLGPDRVAMLRYGVNDIRNFYQNDLRFLNQFKVKE.

Glu-259 provides a ligand contact to Mg(2+).

Belongs to the class-II aminoacyl-tRNA synthetase family. Phe-tRNA synthetase alpha subunit type 1 subfamily. In terms of assembly, tetramer of two alpha and two beta subunits. Mg(2+) serves as cofactor.

It is found in the cytoplasm. It catalyses the reaction tRNA(Phe) + L-phenylalanine + ATP = L-phenylalanyl-tRNA(Phe) + AMP + diphosphate + H(+). The sequence is that of Phenylalanine--tRNA ligase alpha subunit from Enterococcus faecalis (strain ATCC 700802 / V583).